The sequence spans 326 residues: High-affinity zinc uptake system protein ZnuA (326 aa).

Residues 1–22 form the signal peptide; the sequence is MIRPSSLVLAAALGTAALPARA. Residue His59 coordinates Zn(2+). Over residues 117–155 the composition is skewed to basic and acidic residues; it reads GGEHEHEHEHEHEHEHEHEHDGHGHAEEQAHHDHDHSGT. Residues 117-161 are disordered; the sequence is GGEHEHEHEHEHEHEHEHEHDGHGHAEEQAHHDHDHSGTDPHAWL. Zn(2+)-binding residues include His158, His222, and Asp295. A disulfide bridge connects residues Cys267 and Cys322.

Belongs to the bacterial solute-binding protein 9 family. Monomer.

The protein resides in the periplasm. Its function is as follows. Part of the ATP-binding cassette (ABC) transport system ZnuABC involved in zinc import. Binds zinc with high affinity and specificity and delivers it to the membrane permease for translocation into the cytoplasm. This is High-affinity zinc uptake system protein ZnuA from Paracoccus denitrificans (strain Pd 1222).